Reading from the N-terminus, the 239-residue chain is Phosphoadenosine 5'-phosphosulfate reductase (239 aa).

C235 acts as the Nucleophile; cysteine thiosulfonate intermediate in catalysis.

This sequence belongs to the PAPS reductase family. CysH subfamily.

The protein localises to the cytoplasm. The catalysed reaction is [thioredoxin]-disulfide + sulfite + adenosine 3',5'-bisphosphate + 2 H(+) = [thioredoxin]-dithiol + 3'-phosphoadenylyl sulfate. Its pathway is sulfur metabolism; hydrogen sulfide biosynthesis; sulfite from sulfate: step 3/3. Catalyzes the formation of sulfite from phosphoadenosine 5'-phosphosulfate (PAPS) using thioredoxin as an electron donor. This chain is Phosphoadenosine 5'-phosphosulfate reductase, found in Thiocapsa roseopersicina.